The chain runs to 473 residues: Anthocyanidin 5,3-O-glucosyltransferase (473 aa).

Belongs to the UDP-glycosyltransferase family.

It functions in the pathway pigment biosynthesis; anthocyanin biosynthesis. Functionally, sequentially catalyzes two glycosylation steps at the 5-OH and 3-OH positions of anthocyanidin. Unglycosylated anthocyanidin or anthocyanidin 5-O-glucoside, but not anthocyanidin 3-O-glucoside, can be used as glucosyl acceptor. This Rosa hybrid cultivar protein is Anthocyanidin 5,3-O-glucosyltransferase (RhGT1).